The sequence spans 210 residues: Large ribosomal subunit protein uL3 (210 aa).

Positions 126 to 167 (WGFQRGPSGHGSKNIREPGSTGNATFPGRVIKGKKMPGQKGN) are disordered. A compositionally biased stretch (basic residues) spans 156 to 167 (IKGKKMPGQKGN).

Belongs to the universal ribosomal protein uL3 family. As to quaternary structure, part of the 50S ribosomal subunit. Forms a cluster with proteins L14 and L19.

One of the primary rRNA binding proteins, it binds directly near the 3'-end of the 23S rRNA, where it nucleates assembly of the 50S subunit. This Syntrophobacter fumaroxidans (strain DSM 10017 / MPOB) protein is Large ribosomal subunit protein uL3.